The following is a 283-amino-acid chain: Formamidopyrimidine-DNA glycosylase (283 aa).

Proline 2 acts as the Schiff-base intermediate with DNA in catalysis. Residue glutamate 3 is the Proton donor of the active site. The Proton donor; for beta-elimination activity role is filled by lysine 60. Residues histidine 100, arginine 119, and arginine 164 each contribute to the DNA site. The segment at 249–283 (WVYGRENKPCRKCGVKILKAKVAGRGTHWCPNCQK) adopts an FPG-type zinc-finger fold. The active-site Proton donor; for delta-elimination activity is arginine 273.

This sequence belongs to the FPG family. In terms of assembly, monomer. Zn(2+) is required as a cofactor.

It catalyses the reaction Hydrolysis of DNA containing ring-opened 7-methylguanine residues, releasing 2,6-diamino-4-hydroxy-5-(N-methyl)formamidopyrimidine.. The enzyme catalyses 2'-deoxyribonucleotide-(2'-deoxyribose 5'-phosphate)-2'-deoxyribonucleotide-DNA = a 3'-end 2'-deoxyribonucleotide-(2,3-dehydro-2,3-deoxyribose 5'-phosphate)-DNA + a 5'-end 5'-phospho-2'-deoxyribonucleoside-DNA + H(+). Its function is as follows. Involved in base excision repair of DNA damaged by oxidation or by mutagenic agents. Acts as a DNA glycosylase that recognizes and removes damaged bases. Has a preference for oxidized purines, such as 7,8-dihydro-8-oxoguanine (8-oxoG). Has AP (apurinic/apyrimidinic) lyase activity and introduces nicks in the DNA strand. Cleaves the DNA backbone by beta-delta elimination to generate a single-strand break at the site of the removed base with both 3'- and 5'-phosphates. This Prochlorococcus marinus (strain SARG / CCMP1375 / SS120) protein is Formamidopyrimidine-DNA glycosylase.